The chain runs to 49 residues: Large ribosomal subunit protein bL33A (49 aa).

The disordered stretch occupies residues 21–49; that stretch reads KNKRNNPERVEMKKYCSRDNKHTLHRETK. Positions 25–49 are enriched in basic and acidic residues; it reads NNPERVEMKKYCSRDNKHTLHRETK.

Belongs to the bacterial ribosomal protein bL33 family.

This chain is Large ribosomal subunit protein bL33A, found in Staphylococcus epidermidis (strain ATCC 35984 / DSM 28319 / BCRC 17069 / CCUG 31568 / BM 3577 / RP62A).